Reading from the N-terminus, the 438-residue chain is Xylose isomerase (438 aa).

Residues His100 and Asp103 contribute to the active site. The Mg(2+) site is built by Glu231, Glu267, His270, Asp295, Asp306, Asp308, and Asp338.

It belongs to the xylose isomerase family. Homotetramer. The cofactor is Mg(2+).

It localises to the cytoplasm. It carries out the reaction alpha-D-xylose = alpha-D-xylulofuranose. This is Xylose isomerase from Pseudomonas syringae pv. tomato (strain ATCC BAA-871 / DC3000).